Reading from the N-terminus, the 219-residue chain is N-(5'-phosphoribosyl)anthranilate isomerase (219 aa).

It belongs to the TrpF family.

The enzyme catalyses N-(5-phospho-beta-D-ribosyl)anthranilate = 1-(2-carboxyphenylamino)-1-deoxy-D-ribulose 5-phosphate. Its pathway is amino-acid biosynthesis; L-tryptophan biosynthesis; L-tryptophan from chorismate: step 3/5. This is N-(5'-phosphoribosyl)anthranilate isomerase from Bradyrhizobium sp. (strain ORS 278).